The chain runs to 502 residues: tRNA-2-methylthio-N(6)-dimethylallyladenosine synthase (502 aa).

The region spanning 12-129 (RTYQVRTYGC…LPVLLERARH (118 aa)) is the MTTase N-terminal domain. [4Fe-4S] cluster is bound by residues C21, C58, C92, C166, C170, and C173. The 232-residue stretch at 152–383 (RESTYAGWVS…ACVEEITWAE (232 aa)) folds into the Radical SAM core domain. The region spanning 385–455 (RRLVGETVEV…PHHLNADGEP (71 aa)) is the TRAM domain. The interval 451–502 (ADGEPLAHRRTPAGDAAEAGRRPRTAGVSLGLPTVGAPPSPVPPAASSACAC) is disordered.

This sequence belongs to the methylthiotransferase family. MiaB subfamily. Monomer. [4Fe-4S] cluster is required as a cofactor.

It localises to the cytoplasm. The enzyme catalyses N(6)-dimethylallyladenosine(37) in tRNA + (sulfur carrier)-SH + AH2 + 2 S-adenosyl-L-methionine = 2-methylsulfanyl-N(6)-dimethylallyladenosine(37) in tRNA + (sulfur carrier)-H + 5'-deoxyadenosine + L-methionine + A + S-adenosyl-L-homocysteine + 2 H(+). Catalyzes the methylthiolation of N6-(dimethylallyl)adenosine (i(6)A), leading to the formation of 2-methylthio-N6-(dimethylallyl)adenosine (ms(2)i(6)A) at position 37 in tRNAs that read codons beginning with uridine. The protein is tRNA-2-methylthio-N(6)-dimethylallyladenosine synthase of Salinispora arenicola (strain CNS-205).